We begin with the raw amino-acid sequence, 302 residues long: Acetaldehyde dehydrogenase 2 (302 aa).

The active-site Acyl-thioester intermediate is Cys130. NAD(+) contacts are provided by residues 161–169 (SVGPGTRRN) and Asn272.

Belongs to the acetaldehyde dehydrogenase family.

It carries out the reaction acetaldehyde + NAD(+) + CoA = acetyl-CoA + NADH + H(+). This is Acetaldehyde dehydrogenase 2 from Cupriavidus necator (strain ATCC 17699 / DSM 428 / KCTC 22496 / NCIMB 10442 / H16 / Stanier 337) (Ralstonia eutropha).